We begin with the raw amino-acid sequence, 256 residues long: 6-carboxyhexanoate--CoA ligase (256 aa).

This sequence belongs to the BioW family. In terms of assembly, homodimer. Requires Mg(2+) as cofactor.

The catalysed reaction is heptanedioate + ATP + CoA = 6-carboxyhexanoyl-CoA + AMP + diphosphate. Its pathway is metabolic intermediate metabolism; pimeloyl-CoA biosynthesis; pimeloyl-CoA from pimelate: step 1/1. Functionally, catalyzes the transformation of pimelate into pimeloyl-CoA with concomitant hydrolysis of ATP to AMP. This is 6-carboxyhexanoate--CoA ligase from Bacillus amyloliquefaciens (strain ATCC 23350 / DSM 7 / BCRC 11601 / CCUG 28519 / NBRC 15535 / NRRL B-14393 / F).